We begin with the raw amino-acid sequence, 477 residues long: 3-sulfolactaldehyde dehydrogenase (477 aa).

232-233 (GS) is a binding site for NAD(+). E252 serves as the catalytic Proton acceptor. L253 contributes to the NAD(+) binding site. C286 serves as the catalytic Nucleophile. E380 serves as a coordination point for NAD(+).

The protein belongs to the aldehyde dehydrogenase family.

The catalysed reaction is (2S)-3-sulfolactaldehyde + NAD(+) + H2O = (2S)-3-sulfolactate + NADH + 2 H(+). In terms of biological role, part of the sulfo-TAL (or sulfo-SFT) pathway, a D-sulfoquinovose degradation pathway that produces sulfolactate (SL). Catalyzes the oxidation of 3-sulfolactaldehyde (SLA) to sulfolactate (SL). This chain is 3-sulfolactaldehyde dehydrogenase, found in Priestia aryabhattai (Bacillus aryabhattai).